Consider the following 235-residue polypeptide: Carboxy-S-adenosyl-L-methionine synthase (235 aa).

S-adenosyl-L-methionine is bound by residues tyrosine 35, 60–62, 83–84, asparagine 124, and arginine 191; these read GCS and DN.

It belongs to the class I-like SAM-binding methyltransferase superfamily. Cx-SAM synthase family. Homodimer.

The catalysed reaction is prephenate + S-adenosyl-L-methionine = carboxy-S-adenosyl-L-methionine + 3-phenylpyruvate + H2O. Functionally, catalyzes the conversion of S-adenosyl-L-methionine (SAM) to carboxy-S-adenosyl-L-methionine (Cx-SAM). This is Carboxy-S-adenosyl-L-methionine synthase from Campylobacter jejuni subsp. jejuni serotype O:23/36 (strain 81-176).